Consider the following 151-residue polypeptide: uncharacterized protein (151 aa).

The next 4 membrane-spanning stretches (helical) occupy residues Ile22–Phe42, Ala62–Ile82, Leu97–Phe117, and Ile121–Ala141.

It is found in the cell membrane. This is an uncharacterized protein from Bacillus subtilis (strain 168).